The following is a 595-amino-acid chain: Tyrosine-protein phosphatase cdcA (595 aa).

Residues threonine 32–arginine 57 form a disordered region. Positions proline 44–arginine 57 are enriched in basic residues. The Tyrosine-protein phosphatase domain maps to leucine 233–glutamate 381. The Phosphocysteine intermediate role is filled by cysteine 322. Positions glutamine 392–alanine 595 are disordered. Over residues arginine 449–tyrosine 461 the composition is skewed to basic residues. A compositionally biased stretch (basic and acidic residues) spans valine 471 to aspartate 483. The segment covering serine 502–leucine 526 has biased composition (polar residues).

It belongs to the protein-tyrosine phosphatase family. Non-receptor class CDC14 subfamily.

It is found in the nucleus. It localises to the cytoplasm. Its subcellular location is the cell septum. The catalysed reaction is O-phospho-L-tyrosyl-[protein] + H2O = L-tyrosyl-[protein] + phosphate. In terms of biological role, protein phosphatase which antagonizes mitotic cyclin-dependent kinase nimX, the inactivation of which is essential for exit from mitosis. To access its substrates, is released from nucleolar sequestration during mitosis. Plays an essential in coordinating the nuclear division cycle with cytokinesis through the cytokinesis checkpoint. Involved in chromosome segregation, where it is required for meiosis I spindle dissambly as well as for establishing two consecutive chromosome segregation phases. Required for the transcription of the two major endoglucanase genes eglA and eglB and growth on synthetic cellulose as the sole carbon source. In Emericella nidulans (strain FGSC A4 / ATCC 38163 / CBS 112.46 / NRRL 194 / M139) (Aspergillus nidulans), this protein is Tyrosine-protein phosphatase cdcA (cdcA).